The primary structure comprises 151 residues: Deoxyuridine 5'-triphosphate nucleotidohydrolase (151 aa).

Residues 71–73 (RSG), asparagine 84, and 88–90 (TID) contribute to the substrate site.

The protein belongs to the dUTPase family. Mg(2+) is required as a cofactor.

It carries out the reaction dUTP + H2O = dUMP + diphosphate + H(+). It participates in pyrimidine metabolism; dUMP biosynthesis; dUMP from dCTP (dUTP route): step 2/2. In terms of biological role, this enzyme is involved in nucleotide metabolism: it produces dUMP, the immediate precursor of thymidine nucleotides and it decreases the intracellular concentration of dUTP so that uracil cannot be incorporated into DNA. In Gluconobacter oxydans (strain 621H) (Gluconobacter suboxydans), this protein is Deoxyuridine 5'-triphosphate nucleotidohydrolase.